A 712-amino-acid polypeptide reads, in one-letter code: MEIPPQEAPPGPGADADADAEAETEEASAEAESPTGTSPPADGRLKAAAKRVTFPSDEDIVSGAVEPKDPWRHAQNVTVDEVISAYRQACQKLNCRQIPKLLRQLQEFTDLEQRINCLDLKGEKLDYKTCEALEEVFKRLQFKVVDLEQTNLDEDGASALFDMIEYYESATHLNISFNKHIGTRGWQAAAHMMRKTSCLQYLDARNTPLLDHSAPFVARALRIRSSLAVLHLENASLSGRPLMLLATALKMNMNLRELYLADNKLNGLQDSAQLGNLLKFNCSLQILDLRNNHVLDSGLAYICEGLKEQRKGLVTLVLWNNQLTHTGMAFLGMALPHTQSLETLNLGHNPIGNEGVRNLKNGLISNRSVLRLGLASTKLTCEGAVAVAEFIAESPRLLRLDLRENEIKTGGLMALSLALKVNHSLLRLDLDREPKKEPVKSFIETQKALLAEIQNGCKRNFVLVREREEKQQLQLSASMPEITITAPQPLEESGELPAVGSQNGAPRPGPGPDSDSDSDSDREEQEEEEEDQRNQQRDEGGNDQSSLASCPALIPSTDSLGPGDKSPPSSPSSPTEQRISVSSPGRGHKVFVVTRVESPPERPEPPVPPTFVSSPPPSPPSPPASPPSQTMDTQDPESSEAQPQLEPSQAGQPLPNGLKPEFALALPPEPPPGLEAKGGSCSLEHALHRSQGVSKLEELLLEASQEAPRDTL.

Residues 1–12 (MEIPPQEAPPGP) show a composition bias toward pro residues. The tract at residues 1–47 (MEIPPQEAPPGPGADADADAEAETEEASAEAESPTGTSPPADGRLKA) is disordered. The segment covering 16–29 (ADADAEAETEEASA) has biased composition (acidic residues). Phosphoserine occurs at positions 56 and 62. 5 LRR repeats span residues 226–246 (SLAV…MLLA), 254–275 (NLRE…AQLG), 283–303 (SLQI…AYIC), 312–332 (GLVT…AFLG), and 340–360 (SLET…RNLK). The segment at 492–680 (ESGELPAVGS…PPGLEAKGGS (189 aa)) is disordered. The span at 514–531 (SDSDSDSDREEQEEEEED) shows a compositional bias: acidic residues. Phosphoserine is present on Ser583. A compositionally biased stretch (pro residues) spans 605–626 (PPVPPTFVSSPPPSPPSPPASP). The span at 639–651 (SEAQPQLEPSQAG) shows a compositional bias: polar residues.

It belongs to the PPP1R37 family. Interacts with PPP1CA.

Its function is as follows. Inhibits phosphatase activity of protein phosphatase 1 (PP1) complexes. The protein is Protein phosphatase 1 regulatory subunit 37 (Ppp1r37) of Mus musculus (Mouse).